Reading from the N-terminus, the 225-residue chain is NAD(P)H-quinone oxidoreductase subunit K, chloroplastic (225 aa).

Residues cysteine 43, cysteine 44, cysteine 108, and cysteine 139 each coordinate [4Fe-4S] cluster.

Belongs to the complex I 20 kDa subunit family. NDH is composed of at least 16 different subunits, 5 of which are encoded in the nucleus. Requires [4Fe-4S] cluster as cofactor.

It localises to the plastid. Its subcellular location is the chloroplast thylakoid membrane. The enzyme catalyses a plastoquinone + NADH + (n+1) H(+)(in) = a plastoquinol + NAD(+) + n H(+)(out). It catalyses the reaction a plastoquinone + NADPH + (n+1) H(+)(in) = a plastoquinol + NADP(+) + n H(+)(out). Functionally, NDH shuttles electrons from NAD(P)H:plastoquinone, via FMN and iron-sulfur (Fe-S) centers, to quinones in the photosynthetic chain and possibly in a chloroplast respiratory chain. The immediate electron acceptor for the enzyme in this species is believed to be plastoquinone. Couples the redox reaction to proton translocation, and thus conserves the redox energy in a proton gradient. The chain is NAD(P)H-quinone oxidoreductase subunit K, chloroplastic from Liriodendron tulipifera (Tuliptree).